We begin with the raw amino-acid sequence, 636 residues long: Protein BCAP (636 aa).

5 coiled-coil regions span residues 36-97 (LSCL…EQKE), 141-220 (ESEN…WNLQ), 249-325 (YKQR…HGKN), 377-484 (ISSE…ECQE), and 519-631 (LEEE…KMNS).

This sequence belongs to the ODF2 family. As to expression, mainly expressed in trachea and testis. Not detected in bone marrow, bladder, leukocytes. Only weakly detected in tongue, stomach, brain and ovaries.

The protein localises to the cytoplasm. Its subcellular location is the cytoskeleton. It is found in the microtubule organizing center. The protein resides in the centrosome. It localises to the centriole. The protein localises to the centriolar satellite. Its subcellular location is the cilium basal body. Its function is as follows. Acts as a suppressor of ciliogenesis, specifically, the initiation of ciliogenesis. This Homo sapiens (Human) protein is Protein BCAP.